The primary structure comprises 639 residues: Threonine--tRNA ligase (639 aa).

One can recognise a TGS domain in the interval 1-61 (MIHITLPDGS…TADCRLSIIT (61 aa)). The segment at 242 to 533 (DHRKLGRELD…LLEQHAGALP (292 aa)) is catalytic. Residues Cys-333, His-384, and His-510 each contribute to the Zn(2+) site.

The protein belongs to the class-II aminoacyl-tRNA synthetase family. As to quaternary structure, homodimer. It depends on Zn(2+) as a cofactor.

The protein localises to the cytoplasm. The enzyme catalyses tRNA(Thr) + L-threonine + ATP = L-threonyl-tRNA(Thr) + AMP + diphosphate + H(+). Functionally, catalyzes the attachment of threonine to tRNA(Thr) in a two-step reaction: L-threonine is first activated by ATP to form Thr-AMP and then transferred to the acceptor end of tRNA(Thr). Also edits incorrectly charged L-seryl-tRNA(Thr). This is Threonine--tRNA ligase from Verminephrobacter eiseniae (strain EF01-2).